Consider the following 157-residue polypeptide: Ribosomal RNA large subunit methyltransferase H (157 aa).

Residues L73, G105, and 124–129 (LSQMTF) contribute to the S-adenosyl-L-methionine site.

It belongs to the RNA methyltransferase RlmH family. Homodimer.

The protein resides in the cytoplasm. The catalysed reaction is pseudouridine(1915) in 23S rRNA + S-adenosyl-L-methionine = N(3)-methylpseudouridine(1915) in 23S rRNA + S-adenosyl-L-homocysteine + H(+). In terms of biological role, specifically methylates the pseudouridine at position 1915 (m3Psi1915) in 23S rRNA. This Flavobacterium psychrophilum (strain ATCC 49511 / DSM 21280 / CIP 103535 / JIP02/86) protein is Ribosomal RNA large subunit methyltransferase H.